A 492-amino-acid chain; its full sequence is MARAACLLRAISRVLLLPLPLLLLLLLLLPSPLMARARPPESHRHHPVKKGPRLLHAALPNTLTSVPASHWVPSPAGSSRPLRCGVPDLPDVLNARNRQKRFVLSGGRWEKTDLTYRILRFPWQLVREQVRQTVAEALQVWSEVTPLTFTEVHEGRADIMIDFARYWHGDNLPFDGPGGILAHAFFPKTHREGDVHFDYDETWTIGDNQGTDLLQVAAHEFGHVLGLQHTTAAKALMSPFYTFRYPLSLSPDDRRGIQHLYGRPQMAPTSPAPTLSSQAGTDTNEIALLEPETPPDVCETSFDAVSTIRGELFFFKAGFVWRLRSGRLQPGYPALASRHWQGLPSPVDAAFEDAQGQIWFFQGAQYWVYDGEKPVLGPAPLSKLGLQGSPVHAALVWGPEKNKIYFFRGGDYWRFHPRTQRVDNPVPRRSTDWRGVPSEIDAAFQDAEGYAYFLRGHLYWKFDPVKVKVLEGFPRPVGPDFFDCAEPANTFR.

The signal sequence occupies residues 1 to 35 (MARAACLLRAISRVLLLPLPLLLLLLLLLPSPLMA). A propeptide spans 36–101 (RARPPESHRH…VLNARNRQKR (66 aa)) (activation peptide). The short motif at 82 to 89 (LRCGVPDL) is the Cysteine switch element. Zn(2+) contacts are provided by Cys84, His168, and Asp170. 4 residues coordinate Ca(2+): Asp175, Gly176, Gly178, and Ile180. Zn(2+) is bound by residues His183, His196, and His219. Glu220 is a catalytic residue. Zn(2+) is bound by residues His223 and His229. Hemopexin repeat units follow at residues 295–343 (PDVC…WQGL), 344–386 (PSPV…KLGL), 388–436 (GSPV…WRGV), and 437–484 (PSEI…FFDC). A disulfide bridge links Cys298 with Cys484.

This sequence belongs to the peptidase M10A family. Requires Ca(2+) as cofactor. Zn(2+) is required as a cofactor. The precursor is cleaved by a furin endopeptidase. In terms of tissue distribution, specifically expressed in the mammary gland during apoptosis.

Its subcellular location is the secreted. The protein resides in the extracellular space. It is found in the extracellular matrix. May play an important role in the progression of epithelial malignancies. The chain is Stromelysin-3 (Mmp11) from Mus musculus (Mouse).